Reading from the N-terminus, the 426-residue chain is MAFQIPRGTQDVLPGDSEKWQYVEHIARSLCSRYGYQEIRTPIFEHTELFLRGVGDTTDIVQKEMYTFEDKGGRALTLRPEGTAPVVRAFVEHKLYGSPNQPLKLYYSGPMFRYERPEAGRFRQFVQFGVEALGSSDPAIDAEVMALAMHIYEALGLKRIRLVINSLGDLDSRRAHREALVRHFSNRIHELCPDCQTRLHTNPLRILDCKKDRDHELMATAPSILDYLNDESRAYFEKVKQYLTALGIPFVIDARLVRGLDYYNHTTFEIMSEAEGFGAAATLCGGGRYNGLVQEIGGPETPGIGFALSIERLLAALDAEGVELPVESGLDCYVVAVGERAKDEAVRLVYALRRSGLRVDQDYLGRKLKAQLKAADRLGASFVAIIGDEELERQEAAVKHMASGEQTNVPLGELAHFLHERIGKEE.

The protein belongs to the class-II aminoacyl-tRNA synthetase family. As to quaternary structure, homodimer.

The protein resides in the cytoplasm. The enzyme catalyses tRNA(His) + L-histidine + ATP = L-histidyl-tRNA(His) + AMP + diphosphate + H(+). The sequence is that of Histidine--tRNA ligase from Geobacillus kaustophilus (strain HTA426).